Here is a 209-residue protein sequence, read N- to C-terminus: Large ribosomal subunit protein uL4 (209 aa).

A disordered region spans residues 46–76 (RGTASTKTRGEVSGGGRKPWRQKGTGRARHG). Positions 63–76 (KPWRQKGTGRARHG) are enriched in basic residues.

The protein belongs to the universal ribosomal protein uL4 family. As to quaternary structure, part of the 50S ribosomal subunit.

One of the primary rRNA binding proteins, this protein initially binds near the 5'-end of the 23S rRNA. It is important during the early stages of 50S assembly. It makes multiple contacts with different domains of the 23S rRNA in the assembled 50S subunit and ribosome. Functionally, forms part of the polypeptide exit tunnel. This Halothermothrix orenii (strain H 168 / OCM 544 / DSM 9562) protein is Large ribosomal subunit protein uL4.